The sequence spans 218 residues: MMQLRCACERVFDIEHETVISLDEHPEFVARIQQGDFLSYQCPACGARIRAEIKTEFVWHAKNVHLLLVPERERLRCLAFCAGMHMSDGDSADFCEPFVLREHQTPVIGYAELADRVAILAWDLNPEIVEAVKFFVLEGAPHLGDKRVSCFFERCVGDTGSRVMELHVYGIREQQTAIMPVPMNVYERVERERGKQAELFEALYVGAYLSYKNVFTDA.

This is an uncharacterized protein from Treponema pallidum (strain Nichols).